The chain runs to 1428 residues: Gag-Pol polyprotein (1428 aa).

The N-myristoyl glycine; by host moiety is linked to residue Gly-2. The tract at residues 7–31 is interaction with Gp41; the sequence is VLSGKKLDSWEKIRLRPGGNKKYRL. Residues 8-43 are interaction with host CALM1; sequence LSGKKLDSWEKIRLRPGGNKKYRLKHLVWASRELEK. The interval 12-19 is interaction with host AP3D1; the sequence is KLDSWEKI. The interaction with membrane phosphatidylinositol 4,5-bisphosphate and RNA stretch occupies residues 14-33; the sequence is DSWEKIRLRPGGNKKYRLKH. Positions 16 to 22 match the Nuclear export signal motif; the sequence is WEKIRLR. A Nuclear localization signal motif is present at residues 26–32; it reads NKKYRLK. The interaction with membrane phosphatidylinositol 4,5-bisphosphate stretch occupies residues 73 to 77; it reads EELRS. Positions 108-130 are disordered; the sequence is QNKNKQRTQQAAANTGSSQNYPI. The segment covering 114–130 has biased composition (polar residues); it reads RTQQAAANTGSSQNYPI. Tyr-128 carries the phosphotyrosine; by host modification. The tract at residues 185–223 is interaction with human PPIA/CYPA and NUP153; the sequence is NVVGGHQAAMQMLKDTINEEAAEWDRLHPVHAGPIPPGQ. Positions 273 to 359 are dimerization/Multimerization of capsid protein p24; it reads YSPVSILDIR…GGPGHKARVL (87 aa). 2 consecutive CCHC-type zinc fingers follow at residues 384 to 401 and 405 to 422; these read IKCFNCGKEGHLAKNCRA and KGCWKCGKEGHQMKDCTE. The segment at 438-475 is disordered; it reads EAREFSSEQTRANSPTSRNLWDGGKDDLPCETGAERQG. Residues 444–456 show a composition bias toward polar residues; sequence SEQTRANSPTSRN. The segment covering 460–475 has biased composition (basic and acidic residues); the sequence is GGKDDLPCETGAERQG. The interval 482 to 486 is dimerization of protease; the sequence is PQITL. Residues 501–570 form the Peptidase A2 domain; the sequence is IEALLDTGAD…TPVNIIGRNM (70 aa). The For protease activity; shared with dimeric partner role is filled by Asp-506. Dimerization of protease regions lie at residues 530–536 and 569–581; these read GIGGFIK and NMLTQIGCTLNFP. Residues 624–814 enclose the Reverse transcriptase domain; it reads EGKISKIGPE…PPFLWMGYEL (191 aa). Mg(2+)-binding residues include Asp-690, Asp-765, and Asp-766. The RT 'primer grip' stretch occupies residues 807–815; it reads FLWMGYELH. The Tryptophan repeat motif signature appears at 978 to 994; that stretch reads WEAWWMEYWQATWIPEW. One can recognise an RNase H type-1 domain in the interval 1014–1137; sequence IAGAETFYVD…VDKLVSSGIR (124 aa). Asp-1023, Glu-1058, Asp-1078, and Asp-1129 together coordinate Mg(2+). An Integrase-type zinc finger spans residues 1143-1184; that stretch reads DGIDKAQEDHEKYHCNWRAMASDFNLPPVVAKEIVASCNKCQ. Residues His-1152, His-1156, Cys-1180, and Cys-1183 each coordinate Zn(2+). One can recognise an Integrase catalytic domain in the interval 1194-1344; the sequence is VDCSPGIWQL…SAGERIIDII (151 aa). Mg(2+)-binding residues include Asp-1204, Asp-1256, and Glu-1292. Residues 1363–1410 constitute a DNA-binding region (integrase-type); the sequence is FRVYYRDSRDPIWKGPAKLLWKGEGAVVIQDNSDIKVVPRRKAKIIRD.

As to quaternary structure, homotrimer; further assembles as hexamers of trimers. Interacts with gp41 (via C-terminus). Interacts with host CALM1; this interaction induces a conformational change in the Matrix protein, triggering exposure of the myristate group. Interacts with host AP3D1; this interaction allows the polyprotein trafficking to multivesicular bodies during virus assembly. Part of the pre-integration complex (PIC) which is composed of viral genome, matrix protein, Vpr and integrase. Homodimer; the homodimer further multimerizes as homohexamers or homopentamers. Interacts with human PPIA/CYPA; This interaction stabilizes the capsid. Interacts with human NUP153. Interacts with host PDZD8; this interaction stabilizes the capsid. Interacts with monkey TRIM5; this interaction destabilizes the capsid. In terms of assembly, homodimer, whose active site consists of two apposed aspartic acid residues. As to quaternary structure, heterodimer of p66 RT and p51 RT (RT p66/p51). Heterodimerization of RT is essential for DNA polymerase activity. The overall folding of the subdomains is similar in p66 RT and p51 RT but the spatial arrangements of the subdomains are dramatically different. Homotetramer; may further associate as a homohexadecamer. Part of the pre-integration complex (PIC) which is composed of viral genome, matrix protein, Vpr and integrase. Interacts with human SMARCB1/INI1 and human PSIP1/LEDGF isoform 1. Interacts with human KPNA3; this interaction might play a role in nuclear import of the pre-integration complex. Interacts with human NUP153; this interaction might play a role in nuclear import of the pre-integration complex. The cofactor is Mg(2+). Specific enzymatic cleavages by the viral protease yield mature proteins. The protease is released by autocatalytic cleavage. The polyprotein is cleaved during and after budding, this process is termed maturation. Proteolytic cleavage of p66 RT removes the RNase H domain to yield the p51 RT subunit. Nucleocapsid protein p7 might be further cleaved after virus entry. Post-translationally, tyrosine phosphorylated presumably in the virion by a host kinase. Phosphorylation is apparently not a major regulator of membrane association. In terms of processing, phosphorylated possibly by host MAPK1; this phosphorylation is necessary for Pin1-mediated virion uncoating. Methylated by host PRMT6, impairing its function by reducing RNA annealing and the initiation of reverse transcription.

The protein resides in the host cell membrane. The protein localises to the host endosome. Its subcellular location is the host multivesicular body. It is found in the virion membrane. It localises to the host nucleus. The protein resides in the host cytoplasm. The protein localises to the virion. The catalysed reaction is Specific for a P1 residue that is hydrophobic, and P1' variable, but often Pro.. It catalyses the reaction Endohydrolysis of RNA in RNA/DNA hybrids. Three different cleavage modes: 1. sequence-specific internal cleavage of RNA. Human immunodeficiency virus type 1 and Moloney murine leukemia virus enzymes prefer to cleave the RNA strand one nucleotide away from the RNA-DNA junction. 2. RNA 5'-end directed cleavage 13-19 nucleotides from the RNA end. 3. DNA 3'-end directed cleavage 15-20 nucleotides away from the primer terminus.. It carries out the reaction 3'-end directed exonucleolytic cleavage of viral RNA-DNA hybrid.. The enzyme catalyses DNA(n) + a 2'-deoxyribonucleoside 5'-triphosphate = DNA(n+1) + diphosphate. Its activity is regulated as follows. Protease: The viral protease is inhibited by many synthetic protease inhibitors (PIs), such as amprenavir, atazanavir, indinavir, loprinavir, nelfinavir, ritonavir and saquinavir. Use of protease inhibitors in tritherapy regimens permit more ambitious therapeutic strategies. Reverse transcriptase/ribonuclease H: RT can be inhibited either by nucleoside RT inhibitors (NRTIs) or by non nucleoside RT inhibitors (NNRTIs). NRTIs act as chain terminators, whereas NNRTIs inhibit DNA polymerization by binding a small hydrophobic pocket near the RT active site and inducing an allosteric change in this region. Classical NRTIs are abacavir, adefovir (PMEA), didanosine (ddI), lamivudine (3TC), stavudine (d4T), tenofovir (PMPA), zalcitabine (ddC), and zidovudine (AZT). Classical NNRTIs are atevirdine (BHAP U-87201E), delavirdine, efavirenz (DMP-266), emivirine (I-EBU), and nevirapine (BI-RG-587). The tritherapies used as a basic effective treatment of AIDS associate two NRTIs and one NNRTI. Its function is as follows. Mediates, with Gag polyprotein, the essential events in virion assembly, including binding the plasma membrane, making the protein-protein interactions necessary to create spherical particles, recruiting the viral Env proteins, and packaging the genomic RNA via direct interactions with the RNA packaging sequence (Psi). Gag-Pol polyprotein may regulate its own translation, by the binding genomic RNA in the 5'-UTR. At low concentration, the polyprotein would promote translation, whereas at high concentration, the polyprotein would encapsidate genomic RNA and then shut off translation. Functionally, targets the polyprotein to the plasma membrane via a multipartite membrane-binding signal, that includes its myristoylated N-terminus. Matrix protein is part of the pre-integration complex. Implicated in the release from host cell mediated by Vpu. Binds to RNA. In terms of biological role, forms the conical core that encapsulates the genomic RNA-nucleocapsid complex in the virion. Most core are conical, with only 7% tubular. The core is constituted by capsid protein hexamer subunits. The core is disassembled soon after virion entry. Host restriction factors such as TRIM5-alpha or TRIMCyp bind retroviral capsids and cause premature capsid disassembly, leading to blocks in reverse transcription. Capsid restriction by TRIM5 is one of the factors which restricts HIV-1 to the human species. Host PIN1 apparently facilitates the virion uncoating. On the other hand, interactions with PDZD8 or CYPA stabilize the capsid. Encapsulates and protects viral dimeric unspliced genomic RNA (gRNA). Binds these RNAs through its zinc fingers. Acts as a nucleic acid chaperone which is involved in rearangement of nucleic acid secondary structure during gRNA retrotranscription. Also facilitates template switch leading to recombination. As part of the polyprotein, participates in gRNA dimerization, packaging, tRNA incorporation and virion assembly. Its function is as follows. Aspartyl protease that mediates proteolytic cleavages of Gag and Gag-Pol polyproteins during or shortly after the release of the virion from the plasma membrane. Cleavages take place as an ordered, step-wise cascade to yield mature proteins. This process is called maturation. Displays maximal activity during the budding process just prior to particle release from the cell. Also cleaves Nef and Vif, probably concomitantly with viral structural proteins on maturation of virus particles. Hydrolyzes host EIF4GI and PABP1 in order to shut off the capped cellular mRNA translation. The resulting inhibition of cellular protein synthesis serves to ensure maximal viral gene expression and to evade host immune response. Also mediates cleavage of host YTHDF3. Mediates cleavage of host CARD8, thereby activating the CARD8 inflammasome, leading to the clearance of latent HIV-1 in patient CD4(+) T-cells after viral reactivation; in contrast, HIV-1 can evade CARD8-sensing when its protease remains inactive in infected cells prior to viral budding. Functionally, multifunctional enzyme that converts the viral RNA genome into dsDNA in the cytoplasm, shortly after virus entry into the cell. This enzyme displays a DNA polymerase activity that can copy either DNA or RNA templates, and a ribonuclease H (RNase H) activity that cleaves the RNA strand of RNA-DNA heteroduplexes in a partially processive 3' to 5' endonucleasic mode. Conversion of viral genomic RNA into dsDNA requires many steps. A tRNA(3)-Lys binds to the primer-binding site (PBS) situated at the 5'-end of the viral RNA. RT uses the 3' end of the tRNA primer to perform a short round of RNA-dependent minus-strand DNA synthesis. The reading proceeds through the U5 region and ends after the repeated (R) region which is present at both ends of viral RNA. The portion of the RNA-DNA heteroduplex is digested by the RNase H, resulting in a ssDNA product attached to the tRNA primer. This ssDNA/tRNA hybridizes with the identical R region situated at the 3' end of viral RNA. This template exchange, known as minus-strand DNA strong stop transfer, can be either intra- or intermolecular. RT uses the 3' end of this newly synthesized short ssDNA to perform the RNA-dependent minus-strand DNA synthesis of the whole template. RNase H digests the RNA template except for two polypurine tracts (PPTs) situated at the 5'-end and near the center of the genome. It is not clear if both polymerase and RNase H activities are simultaneous. RNase H probably can proceed both in a polymerase-dependent (RNA cut into small fragments by the same RT performing DNA synthesis) and a polymerase-independent mode (cleavage of remaining RNA fragments by free RTs). Secondly, RT performs DNA-directed plus-strand DNA synthesis using the PPTs that have not been removed by RNase H as primers. PPTs and tRNA primers are then removed by RNase H. The 3' and 5' ssDNA PBS regions hybridize to form a circular dsDNA intermediate. Strand displacement synthesis by RT to the PBS and PPT ends produces a blunt ended, linear dsDNA copy of the viral genome that includes long terminal repeats (LTRs) at both ends. In terms of biological role, catalyzes viral DNA integration into the host chromosome, by performing a series of DNA cutting and joining reactions. This enzyme activity takes place after virion entry into a cell and reverse transcription of the RNA genome in dsDNA. The first step in the integration process is 3' processing. This step requires a complex comprising the viral genome, matrix protein, Vpr and integrase. This complex is called the pre-integration complex (PIC). The integrase protein removes 2 nucleotides from each 3' end of the viral DNA, leaving recessed CA OH's at the 3' ends. In the second step, the PIC enters cell nucleus. This process is mediated through integrase and Vpr proteins, and allows the virus to infect a non dividing cell. This ability to enter the nucleus is specific of lentiviruses, other retroviruses cannot and rely on cell division to access cell chromosomes. In the third step, termed strand transfer, the integrase protein joins the previously processed 3' ends to the 5' ends of strands of target cellular DNA at the site of integration. The 5'-ends are produced by integrase-catalyzed staggered cuts, 5 bp apart. A Y-shaped, gapped, recombination intermediate results, with the 5'-ends of the viral DNA strands and the 3' ends of target DNA strands remaining unjoined, flanking a gap of 5 bp. The last step is viral DNA integration into host chromosome. This involves host DNA repair synthesis in which the 5 bp gaps between the unjoined strands are filled in and then ligated. Since this process occurs at both cuts flanking the HIV genome, a 5 bp duplication of host DNA is produced at the ends of HIV-1 integration. Alternatively, Integrase may catalyze the excision of viral DNA just after strand transfer, this is termed disintegration. The protein is Gag-Pol polyprotein (gag-pol) of Human immunodeficiency virus type 1 group M subtype A (isolate U455) (HIV-1).